We begin with the raw amino-acid sequence, 255 residues long: Pyridoxine 5'-phosphate synthase (255 aa).

Positions 8 and 19 each coordinate 3-amino-2-oxopropyl phosphate. The active-site Proton acceptor is the His-44. 1-deoxy-D-xylulose 5-phosphate contacts are provided by Arg-46 and His-51. Glu-74 (proton acceptor) is an active-site residue. Thr-111 is a binding site for 1-deoxy-D-xylulose 5-phosphate. Catalysis depends on His-202, which acts as the Proton donor. 3-amino-2-oxopropyl phosphate is bound by residues Asp-203 and 225–226; that span reads GH.

Belongs to the PNP synthase family. Homooctamer; tetramer of dimers.

It is found in the cytoplasm. The enzyme catalyses 3-amino-2-oxopropyl phosphate + 1-deoxy-D-xylulose 5-phosphate = pyridoxine 5'-phosphate + phosphate + 2 H2O + H(+). It functions in the pathway cofactor biosynthesis; pyridoxine 5'-phosphate biosynthesis; pyridoxine 5'-phosphate from D-erythrose 4-phosphate: step 5/5. Its function is as follows. Catalyzes the complicated ring closure reaction between the two acyclic compounds 1-deoxy-D-xylulose-5-phosphate (DXP) and 3-amino-2-oxopropyl phosphate (1-amino-acetone-3-phosphate or AAP) to form pyridoxine 5'-phosphate (PNP) and inorganic phosphate. The protein is Pyridoxine 5'-phosphate synthase of Xanthomonas oryzae pv. oryzae (strain MAFF 311018).